Consider the following 1040-residue polypeptide: Multidrug resistance protein MdtB (1040 aa).

11 helical membrane passes run 15 to 37, 343 to 365, 369 to 391, 398 to 420, 440 to 462, 474 to 496, 535 to 557, 867 to 889, 909 to 931, 968 to 990, and 1000 to 1022; these read LFIL…GIIG, VQFE…LRNA, LIPS…FLGF, LMAL…ENIA, IGFT…LFMG, VTLA…MMCA, HPWL…YIWI, VWLI…ESFI, LMMA…IGIV, ILMT…GVGA, and MVGG…YLLF.

The protein belongs to the resistance-nodulation-cell division (RND) (TC 2.A.6) family. MdtB subfamily. In terms of assembly, part of a tripartite efflux system composed of MdtA, MdtB and MdtC. MdtB forms a heteromultimer with MdtC.

The protein localises to the cell inner membrane. This Pectobacterium atrosepticum (strain SCRI 1043 / ATCC BAA-672) (Erwinia carotovora subsp. atroseptica) protein is Multidrug resistance protein MdtB.